Here is a 214-residue protein sequence, read N- to C-terminus: Pyridoxine/pyridoxamine 5'-phosphate oxidase (214 aa).

Residues 7-10 (REEY) and Lys65 contribute to the substrate site. Residues 60-65 (RTVLLK), 75-76 (FT), Arg81, Lys82, and Gln104 each bind FMN. The substrate site is built by Tyr122, Arg126, and Ser130. FMN-binding positions include 139–140 (QS) and Trp184. Residue 190–192 (RLH) participates in substrate binding. Residue Arg194 participates in FMN binding.

The protein belongs to the pyridoxamine 5'-phosphate oxidase family. In terms of assembly, homodimer. Requires FMN as cofactor.

The enzyme catalyses pyridoxamine 5'-phosphate + O2 + H2O = pyridoxal 5'-phosphate + H2O2 + NH4(+). The catalysed reaction is pyridoxine 5'-phosphate + O2 = pyridoxal 5'-phosphate + H2O2. The protein operates within cofactor metabolism; pyridoxal 5'-phosphate salvage; pyridoxal 5'-phosphate from pyridoxamine 5'-phosphate: step 1/1. It functions in the pathway cofactor metabolism; pyridoxal 5'-phosphate salvage; pyridoxal 5'-phosphate from pyridoxine 5'-phosphate: step 1/1. Functionally, catalyzes the oxidation of either pyridoxine 5'-phosphate (PNP) or pyridoxamine 5'-phosphate (PMP) into pyridoxal 5'-phosphate (PLP). This Crocosphaera subtropica (strain ATCC 51142 / BH68) (Cyanothece sp. (strain ATCC 51142)) protein is Pyridoxine/pyridoxamine 5'-phosphate oxidase.